Consider the following 44-residue polypeptide: HNDLIRAGLTVCLSENRKRLTCSGLLNMAGSVCCKVDTSCCSSQ.

Post-translationally, contains 3 disulfide bonds. In terms of tissue distribution, expressed by the venom duct.

The protein resides in the secreted. The polypeptide is Conotoxin S5.1 (Conus striatus (Striated cone)).